A 176-amino-acid polypeptide reads, in one-letter code: Inorganic pyrophosphatase (176 aa).

3 residues coordinate substrate: Lys-30, Arg-44, and Tyr-56. 3 residues coordinate Mg(2+): Asp-66, Asp-71, and Asp-103. Tyr-142 lines the substrate pocket.

It belongs to the PPase family. Homohexamer. The cofactor is Mg(2+).

It localises to the cytoplasm. It catalyses the reaction diphosphate + H2O = 2 phosphate + H(+). Its function is as follows. Catalyzes the hydrolysis of inorganic pyrophosphate (PPi) forming two phosphate ions. This chain is Inorganic pyrophosphatase, found in Escherichia coli O6:H1 (strain CFT073 / ATCC 700928 / UPEC).